An 87-amino-acid chain; its full sequence is HssA/B-like protein 31 (87 aa).

This sequence belongs to the hssA/B family.

This chain is HssA/B-like protein 31 (hssl31), found in Dictyostelium discoideum (Social amoeba).